The primary structure comprises 329 residues: GTP 3',8-cyclase (329 aa).

The Radical SAM core domain maps to 8-234 (AFARKFYYLR…QQRARSDGPA (227 aa)). Residue Arg-17 participates in GTP binding. Positions 24 and 28 each coordinate [4Fe-4S] cluster. Tyr-30 contributes to the S-adenosyl-L-methionine binding site. Cys-31 is a binding site for [4Fe-4S] cluster. Residue Arg-68 coordinates GTP. An S-adenosyl-L-methionine-binding site is contributed by Gly-72. GTP is bound at residue Thr-99. Residue Ser-123 coordinates S-adenosyl-L-methionine. Position 160 (Lys-160) interacts with GTP. Met-194 serves as a coordination point for S-adenosyl-L-methionine. Positions 257 and 260 each coordinate [4Fe-4S] cluster. 262–264 (RLR) lines the GTP pocket. [4Fe-4S] cluster is bound at residue Cys-274.

It belongs to the radical SAM superfamily. MoaA family. As to quaternary structure, monomer and homodimer. Requires [4Fe-4S] cluster as cofactor.

The catalysed reaction is GTP + AH2 + S-adenosyl-L-methionine = (8S)-3',8-cyclo-7,8-dihydroguanosine 5'-triphosphate + 5'-deoxyadenosine + L-methionine + A + H(+). The protein operates within cofactor biosynthesis; molybdopterin biosynthesis. Catalyzes the cyclization of GTP to (8S)-3',8-cyclo-7,8-dihydroguanosine 5'-triphosphate. This Pectobacterium atrosepticum (strain SCRI 1043 / ATCC BAA-672) (Erwinia carotovora subsp. atroseptica) protein is GTP 3',8-cyclase.